Here is a 279-residue protein sequence, read N- to C-terminus: MNYNDKSLSALKLGQKTEYKSEYDPTLLQPVPRKLNRDGLGITEQQPFDRGADVWTCYELSWLNENGLPQVAIADVAIDFRSENLIESKSFKLYLNSFNQTKFASLEQVEQALAKDLSQCASGQVSVKVYKLSAYTRQPIVDFAGECIDEQDIQIDSYEFSNEHLASVAEGEIVEETLVSHLLKSNCLITSQPDWGSVQIHYIGKKLNREKLLRYLVSFREHNEFHEQCVERIFTDLIQFTQPEKLTVYARYTRRGGLDINPFRSNFEAVPQNLRMARQ.

86–88 (IES) provides a ligand contact to substrate. NADPH is bound at residue 88-89 (SK). Catalysis depends on cysteine 187, which acts as the Thioimide intermediate. The active-site Proton donor is aspartate 194. 226–227 (HE) contributes to the substrate binding site. NADPH is bound at residue 255–256 (RG).

This sequence belongs to the GTP cyclohydrolase I family. QueF type 2 subfamily. In terms of assembly, homodimer.

Its subcellular location is the cytoplasm. The enzyme catalyses 7-aminomethyl-7-carbaguanine + 2 NADP(+) = 7-cyano-7-deazaguanine + 2 NADPH + 3 H(+). Its pathway is tRNA modification; tRNA-queuosine biosynthesis. Its function is as follows. Catalyzes the NADPH-dependent reduction of 7-cyano-7-deazaguanine (preQ0) to 7-aminomethyl-7-deazaguanine (preQ1). In Actinobacillus pleuropneumoniae serotype 3 (strain JL03), this protein is NADPH-dependent 7-cyano-7-deazaguanine reductase.